Here is a 470-residue protein sequence, read N- to C-terminus: 24-hydroxycholesterol 7-alpha-hydroxylase (470 aa).

The next 2 helical transmembrane spans lie at 3-23 (IMEL…LFLF) and 270-290 (VVLW…LGYI). Residue C415 coordinates heme.

Belongs to the cytochrome P450 family. The cofactor is heme. As to expression, liver specific. Hepatic expression is sexually dimorphic (female &gt; male).

The protein resides in the endoplasmic reticulum membrane. Its subcellular location is the microsome membrane. The catalysed reaction is (24S)-hydroxycholesterol + reduced [NADPH--hemoprotein reductase] + O2 = (24S)-7alpha-dihydroxycholesterol + oxidized [NADPH--hemoprotein reductase] + H2O + H(+). It functions in the pathway steroid metabolism; cholesterol degradation. Its pathway is lipid metabolism; bile acid biosynthesis. In terms of biological role, a cytochrome P450 monooxygenase involved in neural cholesterol clearance through bile acid synthesis. Catalyzes 7-alpha hydroxylation of (24S)-hydroxycholesterol, a neural oxysterol that is metabolized to bile acids in the liver. Mechanistically, uses molecular oxygen inserting one oxygen atom into a substrate, and reducing the second into a water molecule, with two electrons provided by NADPH via cytochrome P450 reductase (CPR; NADPH-ferrihemoprotein reductase). This chain is 24-hydroxycholesterol 7-alpha-hydroxylase (Cyp39a1), found in Mus musculus (Mouse).